A 294-amino-acid chain; its full sequence is NAD kinase (294 aa).

Asp72 (proton acceptor) is an active-site residue. NAD(+) contacts are provided by residues Asp72 to Gly73, Asn146 to Asp147, Arg157, Arg174, Asp176, Thr187 to Ser192, and Gln247.

The protein belongs to the NAD kinase family. It depends on a divalent metal cation as a cofactor.

Its subcellular location is the cytoplasm. The enzyme catalyses NAD(+) + ATP = ADP + NADP(+) + H(+). Functionally, involved in the regulation of the intracellular balance of NAD and NADP, and is a key enzyme in the biosynthesis of NADP. Catalyzes specifically the phosphorylation on 2'-hydroxyl of the adenosine moiety of NAD to yield NADP. The chain is NAD kinase from Saccharophagus degradans (strain 2-40 / ATCC 43961 / DSM 17024).